The chain runs to 205 residues: Thiamine-phosphate synthase (205 aa).

Residues glutamine 36–lysine 40 and aspartate 68 contribute to the 4-amino-2-methyl-5-(diphosphooxymethyl)pyrimidine site. Residues aspartate 69 and aspartate 88 each coordinate Mg(2+). Serine 106 serves as a coordination point for 4-amino-2-methyl-5-(diphosphooxymethyl)pyrimidine. Residue serine 132–threonine 134 coordinates 2-[(2R,5Z)-2-carboxy-4-methylthiazol-5(2H)-ylidene]ethyl phosphate. Lysine 135 lines the 4-amino-2-methyl-5-(diphosphooxymethyl)pyrimidine pocket. Residues glycine 162 and isoleucine 182–serine 183 contribute to the 2-[(2R,5Z)-2-carboxy-4-methylthiazol-5(2H)-ylidene]ethyl phosphate site.

It belongs to the thiamine-phosphate synthase family. Mg(2+) serves as cofactor.

The enzyme catalyses 2-[(2R,5Z)-2-carboxy-4-methylthiazol-5(2H)-ylidene]ethyl phosphate + 4-amino-2-methyl-5-(diphosphooxymethyl)pyrimidine + 2 H(+) = thiamine phosphate + CO2 + diphosphate. It carries out the reaction 2-(2-carboxy-4-methylthiazol-5-yl)ethyl phosphate + 4-amino-2-methyl-5-(diphosphooxymethyl)pyrimidine + 2 H(+) = thiamine phosphate + CO2 + diphosphate. It catalyses the reaction 4-methyl-5-(2-phosphooxyethyl)-thiazole + 4-amino-2-methyl-5-(diphosphooxymethyl)pyrimidine + H(+) = thiamine phosphate + diphosphate. The protein operates within cofactor biosynthesis; thiamine diphosphate biosynthesis; thiamine phosphate from 4-amino-2-methyl-5-diphosphomethylpyrimidine and 4-methyl-5-(2-phosphoethyl)-thiazole: step 1/1. In terms of biological role, condenses 4-methyl-5-(beta-hydroxyethyl)thiazole monophosphate (THZ-P) and 2-methyl-4-amino-5-hydroxymethyl pyrimidine pyrophosphate (HMP-PP) to form thiamine monophosphate (TMP). The polypeptide is Thiamine-phosphate synthase (Caldivirga maquilingensis (strain ATCC 700844 / DSM 13496 / JCM 10307 / IC-167)).